Consider the following 318-residue polypeptide: Ferredoxin--NADP reductase (318 aa).

The FAD site is built by aspartate 33, glutamine 41, tyrosine 46, valine 84, phenylalanine 115, aspartate 276, and threonine 316.

It belongs to the ferredoxin--NADP reductase type 2 family. As to quaternary structure, homodimer. The cofactor is FAD.

The catalysed reaction is 2 reduced [2Fe-2S]-[ferredoxin] + NADP(+) + H(+) = 2 oxidized [2Fe-2S]-[ferredoxin] + NADPH. This is Ferredoxin--NADP reductase from Lactobacillus johnsonii (strain CNCM I-12250 / La1 / NCC 533).